The sequence spans 385 residues: 26S proteasome non-ATPase regulatory subunit 13 (385 aa).

In terms of domain architecture, PCI spans 176 to 347 (EFYKNALMYL…EIIHITWVTP (172 aa)).

This sequence belongs to the proteasome subunit S11 family.

Its function is as follows. Acts as a regulatory subunit of the 26S proteasome which is involved in the ATP-dependent degradation of ubiquitinated proteins. The polypeptide is 26S proteasome non-ATPase regulatory subunit 13 (psmD13) (Dictyostelium discoideum (Social amoeba)).